Here is a 163-residue protein sequence, read N- to C-terminus: NADH-quinone oxidoreductase subunit I (163 aa).

4Fe-4S ferredoxin-type domains follow at residues 53–83 (LRRY…IEAG) and 94–123 (VRYD…EGPN). [4Fe-4S] cluster-binding residues include Cys-63, Cys-66, Cys-69, Cys-73, Cys-103, Cys-106, Cys-109, and Cys-113.

It belongs to the complex I 23 kDa subunit family. As to quaternary structure, NDH-1 is composed of 14 different subunits. Subunits NuoA, H, J, K, L, M, N constitute the membrane sector of the complex. It depends on [4Fe-4S] cluster as a cofactor.

The protein resides in the cell inner membrane. The catalysed reaction is a quinone + NADH + 5 H(+)(in) = a quinol + NAD(+) + 4 H(+)(out). In terms of biological role, NDH-1 shuttles electrons from NADH, via FMN and iron-sulfur (Fe-S) centers, to quinones in the respiratory chain. The immediate electron acceptor for the enzyme in this species is believed to be ubiquinone. Couples the redox reaction to proton translocation (for every two electrons transferred, four hydrogen ions are translocated across the cytoplasmic membrane), and thus conserves the redox energy in a proton gradient. The sequence is that of NADH-quinone oxidoreductase subunit I from Bartonella henselae (strain ATCC 49882 / DSM 28221 / CCUG 30454 / Houston 1) (Rochalimaea henselae).